Here is a 275-residue protein sequence, read N- to C-terminus: Undecaprenyl-diphosphatase (275 aa).

8 helical membrane passes run 2-22 (LDIF…FLPI), 43-63 (FTDM…VVLY), 83-103 (WVLW…GLPL), 111-131 (LMNW…FIVI), 147-167 (TLPY…LIPG), 186-206 (YVAT…ASLL), 221-241 (LQGA…YLSI), and 255-275 (AFGW…TLIH).

Belongs to the UppP family.

The protein localises to the cell membrane. The enzyme catalyses di-trans,octa-cis-undecaprenyl diphosphate + H2O = di-trans,octa-cis-undecaprenyl phosphate + phosphate + H(+). In terms of biological role, catalyzes the dephosphorylation of undecaprenyl diphosphate (UPP). Confers resistance to bacitracin. This chain is Undecaprenyl-diphosphatase, found in Lactiplantibacillus plantarum (strain ATCC BAA-793 / NCIMB 8826 / WCFS1) (Lactobacillus plantarum).